A 249-amino-acid chain; its full sequence is Type III pantothenate kinase (249 aa).

6–13 lines the ATP pocket; sequence DCGNSLIK. Substrate is bound by residues Y93 and 100–103; that span reads GLDR. The active-site Proton acceptor is the D102. Position 122 (D122) interacts with K(+). Position 125 (T125) interacts with ATP. T181 contacts substrate.

It belongs to the type III pantothenate kinase family. Homodimer. The cofactor is NH4(+). K(+) is required as a cofactor.

It localises to the cytoplasm. It catalyses the reaction (R)-pantothenate + ATP = (R)-4'-phosphopantothenate + ADP + H(+). It participates in cofactor biosynthesis; coenzyme A biosynthesis; CoA from (R)-pantothenate: step 1/5. Functionally, catalyzes the phosphorylation of pantothenate (Pan), the first step in CoA biosynthesis. In Pseudomonas paraeruginosa (strain DSM 24068 / PA7) (Pseudomonas aeruginosa (strain PA7)), this protein is Type III pantothenate kinase.